Here is a 567-residue protein sequence, read N- to C-terminus: Dihydroxy-acid dehydratase (567 aa).

C52 contacts [2Fe-2S] cluster. D84 serves as a coordination point for Mg(2+). Position 125 (C125) interacts with [2Fe-2S] cluster. Mg(2+) is bound by residues D126 and K127. Position 127 is an N6-carboxylysine (K127). Residue C197 participates in [2Fe-2S] cluster binding. Mg(2+) is bound at residue E448. Residue S474 is the Proton acceptor of the active site.

This sequence belongs to the IlvD/Edd family. As to quaternary structure, homodimer. [2Fe-2S] cluster serves as cofactor. Mg(2+) is required as a cofactor.

It carries out the reaction (2R)-2,3-dihydroxy-3-methylbutanoate = 3-methyl-2-oxobutanoate + H2O. The enzyme catalyses (2R,3R)-2,3-dihydroxy-3-methylpentanoate = (S)-3-methyl-2-oxopentanoate + H2O. The protein operates within amino-acid biosynthesis; L-isoleucine biosynthesis; L-isoleucine from 2-oxobutanoate: step 3/4. It participates in amino-acid biosynthesis; L-valine biosynthesis; L-valine from pyruvate: step 3/4. Functionally, functions in the biosynthesis of branched-chain amino acids. Catalyzes the dehydration of (2R,3R)-2,3-dihydroxy-3-methylpentanoate (2,3-dihydroxy-3-methylvalerate) into 2-oxo-3-methylpentanoate (2-oxo-3-methylvalerate) and of (2R)-2,3-dihydroxy-3-methylbutanoate (2,3-dihydroxyisovalerate) into 2-oxo-3-methylbutanoate (2-oxoisovalerate), the penultimate precursor to L-isoleucine and L-valine, respectively. This is Dihydroxy-acid dehydratase from Streptococcus pneumoniae (strain CGSP14).